Reading from the N-terminus, the 140-residue chain is PDZ domain-containing protein 11 (140 aa).

A PDZ domain is found at 47–129 (IVTLKKPPGA…ISMRVRFFPY (83 aa)).

Interacts with ATP2B1, ATP2B2, ATP2B3, ATP2B4 and ATP7A. Interacts with PLEKHA7 (via WW domains) at zonula adherens; this interaction is essential for the interaction between PLEKHA7 and the ADAM10-binding protein TSPAN33. Interacts with SLC5A6.

The protein localises to the cytoplasm. It is found in the cell junction. Its subcellular location is the adherens junction. It localises to the cell membrane. Mediates docking of ADAM10 to zonula adherens by interacting with PLEKHA7 which is required for PLEKHA7 to interact with the ADAM10-binding protein TSPAN33. The chain is PDZ domain-containing protein 11 (Pdzd11) from Mus musculus (Mouse).